We begin with the raw amino-acid sequence, 24 residues long: Aldehyde dehydrogenase gamma chain (24 aa).

In terms of assembly, heterotrimer composed of an alpha, a beta and a gamma chain. [2Fe-2S] cluster is required as a cofactor.

The enzyme catalyses an aldehyde + a quinone + H2O = a quinol + a carboxylate + H(+). This chain is Aldehyde dehydrogenase gamma chain, found in Comamonas testosteroni (Pseudomonas testosteroni).